The following is a 765-amino-acid chain: Phosphoribosylformylglycinamidine synthase subunit PurL (765 aa).

The span at 1-13 (MTVSPTSAPTQAI) shows a compositional bias: polar residues. The disordered stretch occupies residues 1–32 (MTVSPTSAPTQAIDTVERAATTPDEPQPFGEL). His-65 is a catalytic residue. ATP-binding residues include Tyr-68 and Lys-112. Glu-114 provides a ligand contact to Mg(2+). Substrate contacts are provided by residues 115–118 (SHNH) and Arg-137. Catalysis depends on His-116, which acts as the Proton acceptor. Asp-138 provides a ligand contact to Mg(2+). Gln-263 contacts substrate. Asp-291 contributes to the Mg(2+) binding site. Substrate is bound at residue 335–337 (ESQ). Residues Asn-523 and Gly-560 each contribute to the ATP site. Mg(2+) is bound at residue Asn-561. Ser-563 lines the substrate pocket.

Belongs to the FGAMS family. As to quaternary structure, monomer. Part of the FGAM synthase complex composed of 1 PurL, 1 PurQ and 2 PurS subunits.

The protein resides in the cytoplasm. The enzyme catalyses N(2)-formyl-N(1)-(5-phospho-beta-D-ribosyl)glycinamide + L-glutamine + ATP + H2O = 2-formamido-N(1)-(5-O-phospho-beta-D-ribosyl)acetamidine + L-glutamate + ADP + phosphate + H(+). It functions in the pathway purine metabolism; IMP biosynthesis via de novo pathway; 5-amino-1-(5-phospho-D-ribosyl)imidazole from N(2)-formyl-N(1)-(5-phospho-D-ribosyl)glycinamide: step 1/2. In terms of biological role, part of the phosphoribosylformylglycinamidine synthase complex involved in the purines biosynthetic pathway. Catalyzes the ATP-dependent conversion of formylglycinamide ribonucleotide (FGAR) and glutamine to yield formylglycinamidine ribonucleotide (FGAM) and glutamate. The FGAM synthase complex is composed of three subunits. PurQ produces an ammonia molecule by converting glutamine to glutamate. PurL transfers the ammonia molecule to FGAR to form FGAM in an ATP-dependent manner. PurS interacts with PurQ and PurL and is thought to assist in the transfer of the ammonia molecule from PurQ to PurL. The polypeptide is Phosphoribosylformylglycinamidine synthase subunit PurL (Mycolicibacterium paratuberculosis (strain ATCC BAA-968 / K-10) (Mycobacterium paratuberculosis)).